The primary structure comprises 466 residues: Adenosylhomocysteinase (466 aa).

The substrate site is built by threonine 57, aspartate 132, and glutamate 192. 193 to 195 (TTT) lines the NAD(+) pocket. 2 residues coordinate substrate: lysine 222 and aspartate 226. Residues asparagine 227, 256-261 (GYGDVG), glutamate 279, asparagine 314, 335-337 (IGH), and asparagine 380 each bind NAD(+).

This sequence belongs to the adenosylhomocysteinase family. NAD(+) serves as cofactor.

It is found in the cytoplasm. The catalysed reaction is S-adenosyl-L-homocysteine + H2O = L-homocysteine + adenosine. It participates in amino-acid biosynthesis; L-homocysteine biosynthesis; L-homocysteine from S-adenosyl-L-homocysteine: step 1/1. Its function is as follows. May play a key role in the regulation of the intracellular concentration of adenosylhomocysteine. The protein is Adenosylhomocysteinase of Chromobacterium violaceum (strain ATCC 12472 / DSM 30191 / JCM 1249 / CCUG 213 / NBRC 12614 / NCIMB 9131 / NCTC 9757 / MK).